Consider the following 263-residue polypeptide: 3-methyl-2-oxobutanoate hydroxymethyltransferase (263 aa).

2 residues coordinate Mg(2+): D45 and D84. 3-methyl-2-oxobutanoate-binding positions include 45-46 (DS), D84, and K112. E114 is a Mg(2+) binding site. E180 functions as the Proton acceptor in the catalytic mechanism.

The protein belongs to the PanB family. As to quaternary structure, homodecamer; pentamer of dimers. The cofactor is Mg(2+).

It is found in the cytoplasm. The enzyme catalyses 3-methyl-2-oxobutanoate + (6R)-5,10-methylene-5,6,7,8-tetrahydrofolate + H2O = 2-dehydropantoate + (6S)-5,6,7,8-tetrahydrofolate. The protein operates within cofactor biosynthesis; (R)-pantothenate biosynthesis; (R)-pantoate from 3-methyl-2-oxobutanoate: step 1/2. Its function is as follows. Catalyzes the reversible reaction in which hydroxymethyl group from 5,10-methylenetetrahydrofolate is transferred onto alpha-ketoisovalerate to form ketopantoate. This Salmonella arizonae (strain ATCC BAA-731 / CDC346-86 / RSK2980) protein is 3-methyl-2-oxobutanoate hydroxymethyltransferase.